A 1687-amino-acid polypeptide reads, in one-letter code: Muscle calcium channel subunit alpha-1 (1687 aa).

The interval 1 to 33 (MDDAVCPTETDNVQNKQKATTPKRTQRRGGKQQ) is disordered. Residues 1-61 (MDDAVCPTET…IFCIKIVDSK (61 aa)) are Cytoplasmic-facing. The span at 9–23 (ETDNVQNKQKATTPK) shows a compositional bias: polar residues. Residues 48–330 (NPLRIFCIKI…LILGVLSGEF (283 aa)) form an I repeat. The helical transmembrane segment at 62–80 (LFEYFILLTIFANCVALAV) threads the bilayer. At 81–99 (YTPYPSGDSNITNQMLEKI) the chain is on the extracellular side. N-linked (GlcNAc...) asparagine glycosylation occurs at asparagine 90. The chain crosses the membrane as a helical span at residues 100-117 (EYIFLVIFTSECVMKIIA). Over 118-130 (YGFVLHTGSYLRN) the chain is Cytoplasmic. The helical transmembrane segment at 131–145 (GWNFLDFFIVVIGMI) threads the bilayer. The Extracellular portion of the chain corresponds to 146-157 (STALSNLVKEGF). The chain crosses the membrane as a helical span at residues 158–176 (DVKALRAFRVLRPLRLVSG). Residues 177–196 (VPSLQVVLNSILKAMIPLLH) are Cytoplasmic-facing. The helical transmembrane segment at 197–216 (IALLVLFVIIIYAIIGLELF) threads the bilayer. Over 217 to 302 (SGKLHKTCRH…SIQDAMGSSW (86 aa)) the chain is Extracellular. Residue glutamate 285 coordinates Ca(2+). Residues 303–327 (EWIYFVSMVILGAFFVMNLILGVLS) form a helical membrane-spanning segment. Topologically, residues 328 to 434 (GEFSKERTKA…RACRKAVKSQ (107 aa)) are cytoplasmic. One copy of the II repeat lies at 420–667 (NRRIRRACRK…VFLAIAVDNL (248 aa)). The helical transmembrane segment at 435-454 (AFYWLIILLVFLNTGVLATE) threads the bilayer. Residues 455–467 (HYRQPIWLDQFQE) lie on the Extracellular side of the membrane. Residues 468 to 487 (YTNIFFIALFTCEMILKMYS) traverse the membrane as a helical segment. Residues 488–496 (LGFQGYFVS) are Cytoplasmic-facing. The chain crosses the membrane as a helical span at residues 497 to 515 (LFNRFDCFVVIGSISEMVL). The Extracellular portion of the chain corresponds to 516–525 (TSSELMAPLG). Residues 526–544 (VSVLRCVRLLRVFKVTKYW) traverse the membrane as a helical segment. The Cytoplasmic portion of the chain corresponds to 545–563 (HSLSNLVASLLNSIQSIAS). A helical membrane pass occupies residues 564 to 583 (LLLLLFLFIVIFGLLGMQVF). Residues 584–639 (GGRFTFKPEEEKPRSNFDSFYQSLLTVFQILTGEDWNVVMYDGIRAYGGVFSFGIV) are Extracellular-facing. Glutamate 617 lines the Ca(2+) pocket. Residues 640–664 (ACIYYIILFICGNYILLNVFLAIAV) form a helical membrane-spanning segment. The Cytoplasmic portion of the chain corresponds to 665–785 (DNLADADSLS…TNRFRIFCHR (121 aa)). The stretch at 777-1059 (NRFRIFCHRL…IFVGFVIVTF (283 aa)) is one III repeat. A helical transmembrane segment spans residues 786–809 (LCNHSNFGNFILCCIMFSSAMLAA). Over 810 to 826 (ENPLKADASRNIVLNKF) the chain is Extracellular. A helical membrane pass occupies residues 827–846 (DYFFTAVFTIELVLKLISYG). At 847-854 (FVLHDGAF) the chain is on the cytoplasmic side. The helical transmembrane segment at 855–877 (CRSAFNLLDLLVVCVSLISIFFN) threads the bilayer. Residues 878 to 885 (SNAISVVK) lie on the Extracellular side of the membrane. A helical membrane pass occupies residues 886-900 (ILRVLRVLRPLRAIN). Over 901-921 (RAKGLKHVVQCVIVAVKTIGN) the chain is Cytoplasmic. A helical transmembrane segment spans residues 922–941 (IVLVTCLLQFMFAVIGVQLF). At 942 to 1030 (KGKFFSCSDG…NGGPIYNFRP (89 aa)) the chain is on the extracellular side. The dihydropyridine binding stretch occupies residues 979–1068 (REWKNNKFHF…FQNEGEQEYK (90 aa)). Glutamate 1005 provides a ligand contact to Ca(2+). A helical membrane pass occupies residues 1031-1055 (IVAAYYIIYIIIIAFFMVNIFVGFV). Over 1056–1110 (IVTFQNEGEQEYKNCELDKNQRNCIEFALKAKPVRRYIPKHSIQYKVWWFVTSSS) the chain is Cytoplasmic. An IV repeat occupies 1096-1370 (HSIQYKVWWF…LFVAVIMDNF (275 aa)). The helical transmembrane segment at 1111–1129 (FEYSIFVLIMINTVTLAMK) threads the bilayer. Topologically, residues 1130 to 1143 (FYKQPEYYSEILDA) are extracellular. The helical transmembrane segment at 1144-1163 (LNMIFTAVFSLEFIFKLAAF) threads the bilayer. Residues 1164 to 1172 (RFKNYFGDA) lie on the Cytoplasmic side of the membrane. Residues 1173–1191 (WNTFDFIIVLGSFIDIVYS) form a helical membrane-spanning segment. Residues 1192–1219 (EIKTKEQALATCDGQSCNKAKGGSTLIS) are Extracellular-facing. Residues 1220 to 1238 (INFFRLFRVMRLVKLLSKG) traverse the membrane as a helical segment. Residues 1239–1257 (EGIRTLLWTFIKSFQALPY) are Cytoplasmic-facing. The chain crosses the membrane as a helical span at residues 1258 to 1277 (VALLIVMLFFIYAVIGMQVF). Residues 1278-1343 (GKIMLEEGTS…AVNNCGSSIA (66 aa)) are Extracellular-facing. The segment at 1327–1389 (KCDPESDAVN…LGPHHLDEFI (63 aa)) is dihydropyridine binding. The interval 1337–1378 (NCGSSIAFPYFISFYVLCSFLIINLFVAVIMDNFDYLTRDWS) is phenylalkylamine binding. A helical transmembrane segment spans residues 1344–1362 (FPYFISFYVLCSFLIINLF). Residues 1363-1687 (VAVIMDNFDY…PKSKDKDEEF (325 aa)) are Cytoplasmic-facing.

Belongs to the calcium channel alpha-1 subunit (TC 1.A.1.11) family. Predominantly expressed in the larval body wall musculature. In adults, highest expression in thorax followed by head and at a lower extent by abdomen.

Its subcellular location is the membrane. Voltage-sensitive calcium channels (VSCC) mediate the entry of calcium ions into excitable cells and are also involved in a variety of calcium-dependent processes, including muscle contraction, hormone or neurotransmitter release, gene expression, cell motility, cell division and cell death. MDL-alpha1 encodes a dihydropyridine- and diltiazem-sensitive current in larval body wall muscle. This chain is Muscle calcium channel subunit alpha-1, found in Musca domestica (House fly).